We begin with the raw amino-acid sequence, 172 residues long: S-ribosylhomocysteine lyase (172 aa).

Fe cation-binding residues include His-54, His-58, and Cys-128.

Belongs to the LuxS family. Homodimer. Fe cation serves as cofactor.

The enzyme catalyses S-(5-deoxy-D-ribos-5-yl)-L-homocysteine = (S)-4,5-dihydroxypentane-2,3-dione + L-homocysteine. In terms of biological role, involved in the synthesis of autoinducer 2 (AI-2) which is secreted by bacteria and is used to communicate both the cell density and the metabolic potential of the environment. The regulation of gene expression in response to changes in cell density is called quorum sensing. Catalyzes the transformation of S-ribosylhomocysteine (RHC) to homocysteine (HC) and 4,5-dihydroxy-2,3-pentadione (DPD). The sequence is that of S-ribosylhomocysteine lyase from Aliivibrio salmonicida (strain LFI1238) (Vibrio salmonicida (strain LFI1238)).